Consider the following 92-residue polypeptide: Small ribosomal subunit protein bS20 (92 aa).

Residues 1–23 (MANSPSAKKRAKQAEKRRSHNAS) are disordered. Residues 7-20 (AKKRAKQAEKRRSH) are compositionally biased toward basic residues.

The protein belongs to the bacterial ribosomal protein bS20 family.

In terms of biological role, binds directly to 16S ribosomal RNA. This chain is Small ribosomal subunit protein bS20, found in Ectopseudomonas mendocina (strain ymp) (Pseudomonas mendocina).